Consider the following 77-residue polypeptide: Acyl carrier protein (77 aa).

Residues methionine 1 to glutamine 76 form the Carrier domain. Position 36 is an O-(pantetheine 4'-phosphoryl)serine (serine 36).

It belongs to the acyl carrier protein (ACP) family. Post-translationally, 4'-phosphopantetheine is transferred from CoA to a specific serine of apo-ACP by AcpS. This modification is essential for activity because fatty acids are bound in thioester linkage to the sulfhydryl of the prosthetic group.

Its subcellular location is the cytoplasm. Its pathway is lipid metabolism; fatty acid biosynthesis. Its function is as follows. Carrier of the growing fatty acid chain in fatty acid biosynthesis. This chain is Acyl carrier protein, found in Chlamydia trachomatis serovar A (strain ATCC VR-571B / DSM 19440 / HAR-13).